Consider the following 494-residue polypeptide: Nuclear distribution protein PAC1 (494 aa).

In terms of domain architecture, LisH spans 14-46; sequence QKNELDKSVLRYLNWNYKQTVRHEHAQDYESVR. Residues 90-123 are a coiled coil; sequence NSIVRLQKKIIELEQNTETLVSQIKDLNTQVSEL. WD repeat units follow at residues 153–192, 196–244, 251–292, 295–334, 347–395, 415–454, and 457–492; these read NVES…IPLA, SHTK…CKFQ, GHEH…SLKT, PHSQ…SVGT, HFIE…LMAH, GHLS…HVWE, and HTGF…SNVF.

Belongs to the WD repeat LIS1/nudF family. In terms of assembly, self-associates. Interacts with NDL1 and dynein.

Its subcellular location is the cytoplasm. It localises to the cytoskeleton. It is found in the spindle pole. Functionally, positively regulates the activity of the minus-end directed microtubule motor protein dynein. Plays a central role in positioning the mitotic spindle at the bud neck during cell division. Targets cytoplasmic dynein to microtubule plus ends, thereby promoting dynein-mediated microtubule sliding along the bud cortex and consequently the movement of the mitotic spindle to the bud neck. This is Nuclear distribution protein PAC1 from Saccharomyces cerevisiae (strain YJM789) (Baker's yeast).